We begin with the raw amino-acid sequence, 96 residues long: MPTTLIFTSFFLALLGLSLQRKHLLSLLLTLESMALALYVSTALWALNNTSLPIMAAPLIILTFSACEAGMGLSLMIATARTHNTDQLKALNLLKC.

The next 3 helical transmembrane spans lie at methionine 1 to arginine 21, leucine 27 to leucine 47, and alanine 57 to isoleucine 77.

This sequence belongs to the complex I subunit 4L family.

Its subcellular location is the mitochondrion membrane. It catalyses the reaction a ubiquinone + NADH + 5 H(+)(in) = a ubiquinol + NAD(+) + 4 H(+)(out). Its function is as follows. Core subunit of the mitochondrial membrane respiratory chain NADH dehydrogenase (Complex I) which catalyzes electron transfer from NADH through the respiratory chain, using ubiquinone as an electron acceptor. Part of the enzyme membrane arm which is embedded in the lipid bilayer and involved in proton translocation. The protein is NADH-ubiquinone oxidoreductase chain 4L (MT-ND4L) of Petromyzon marinus (Sea lamprey).